We begin with the raw amino-acid sequence, 465 residues long: Respiratory transcription factor ZNF1 (465 aa).

Residues 8–34 (CDCCCIRRVKCDRKKPCKCCLQHNLQC) constitute a DNA-binding region (zn(2)-C6 fungal-type).

The protein belongs to the MAL13 family.

It is found in the nucleus. Functionally, transcription factor that regulates respiratory growth and plays a critical role in stress adaptation during non-fermentative growth. Binds to promoters of genes involved in non-fermentative metabolism, including processes such as gluconeogenesis (PCK1, FBP1 and MDH2), glyoxylate shunt (MLS1 and ICL1) and the tricarboxylic acid cycle (ACO1). Plays a role in maintaining mitochondrial morphology and function. Also plays a role in tolerance to pH and osmotic stress, especially during the oxidative metabolism. The protein is Respiratory transcription factor ZNF1 of Saccharomyces cerevisiae (strain ATCC 204508 / S288c) (Baker's yeast).